Consider the following 227-residue polypeptide: UPF0173 metal-dependent hydrolase SSO0099 (227 aa).

Belongs to the UPF0173 family.

The polypeptide is UPF0173 metal-dependent hydrolase SSO0099 (Saccharolobus solfataricus (strain ATCC 35092 / DSM 1617 / JCM 11322 / P2) (Sulfolobus solfataricus)).